The following is a 52-amino-acid chain: Conotoxin Cal6.3b (52 aa).

The propeptide occupies 1–4 (KKKR). Disulfide bonds link C12-C23, C15-C27, and C22-C30. Q50 carries the glutamine amide modification.

As to expression, expressed by the venom duct.

The protein resides in the secreted. Its function is as follows. Probable neurotoxin with unknown target. Possibly targets ion channels. The sequence is that of Conotoxin Cal6.3b from Californiconus californicus (California cone).